The sequence spans 306 residues: tRNA dimethylallyltransferase (306 aa).

12–19 lines the ATP pocket; the sequence is GPTGVGKS. 14 to 19 contacts substrate; that stretch reads TGVGKS.

The protein belongs to the IPP transferase family. Monomer. Mg(2+) serves as cofactor.

It carries out the reaction adenosine(37) in tRNA + dimethylallyl diphosphate = N(6)-dimethylallyladenosine(37) in tRNA + diphosphate. Functionally, catalyzes the transfer of a dimethylallyl group onto the adenine at position 37 in tRNAs that read codons beginning with uridine, leading to the formation of N6-(dimethylallyl)adenosine (i(6)A). The protein is tRNA dimethylallyltransferase of Desulfatibacillum aliphaticivorans.